The following is a 328-amino-acid chain: Leucine carboxyl methyltransferase 1 (328 aa).

S-adenosyl-L-methionine contacts are provided by residues R81, G105, D128, 175 to 177, and E201; that span reads DLN.

This sequence belongs to the methyltransferase superfamily. LCMT family.

It catalyses the reaction [phosphatase 2A protein]-C-terminal L-leucine + S-adenosyl-L-methionine = [phosphatase 2A protein]-C-terminal L-leucine methyl ester + S-adenosyl-L-homocysteine. Inhibited by S-adenosyl-L-homocysteine. In terms of biological role, methylates the carboxyl group of the C-terminal leucine residue of protein phosphatase 2A catalytic subunits to form alpha-leucine ester residues. Acts on the two major protein phosphatase 2A catalytic subunits, PPH21 and PPH22. The sequence is that of Leucine carboxyl methyltransferase 1 (PPM1) from Saccharomyces cerevisiae (strain ATCC 204508 / S288c) (Baker's yeast).